We begin with the raw amino-acid sequence, 168 residues long: Microtubule-associated protein Jupiter (168 aa).

Positions Met-1–Ser-14 are enriched in polar residues. A disordered region spans residues Met-1 to Pro-33. Ser-24 carries the phosphoserine modification. Thr-35 is subject to Phosphothreonine. The segment covering Arg-76–Leu-87 has biased composition (basic and acidic residues). Disordered stretches follow at residues Arg-76–Ile-106 and Asn-124–Lys-168. Phosphothreonine is present on residues Thr-92 and Thr-96. Residues Ser-105, Ser-133, and Ser-144 each carry the phosphoserine modification. Positions Ser-131–Ser-144 are enriched in low complexity. Positions Thr-145 to Arg-155 are enriched in polar residues.

Belongs to the MAP Jupiter family.

It is found in the nucleus. The protein resides in the cytoplasm. It localises to the cytoskeleton. The protein localises to the spindle. Binds to all microtubule populations. The polypeptide is Microtubule-associated protein Jupiter (Drosophila simulans (Fruit fly)).